Reading from the N-terminus, the 322-residue chain is Undecaprenyl-phosphate 4-deoxy-4-formamido-L-arabinose transferase (322 aa).

The Cytoplasmic portion of the chain corresponds to 1-235 (MFEIHPVKKV…TCLTTTPLRM (235 aa)). A helical membrane pass occupies residues 236 to 256 (LSLLGSIIAIGGFSIAVLLVI). Residues 257 to 269 (LRLTFGPQWAAEG) lie on the Periplasmic side of the membrane. Residues 270–290 (VFMLFAVLFTFIGAQFIGMGL) form a helical membrane-spanning segment. At 291 to 322 (LGEYIGRIYTDVRARPRYFVQQVIRPSSKENE) the chain is on the cytoplasmic side.

Belongs to the glycosyltransferase 2 family.

Its subcellular location is the cell inner membrane. The catalysed reaction is UDP-4-deoxy-4-formamido-beta-L-arabinose + di-trans,octa-cis-undecaprenyl phosphate = 4-deoxy-4-formamido-alpha-L-arabinopyranosyl di-trans,octa-cis-undecaprenyl phosphate + UDP. Its pathway is glycolipid biosynthesis; 4-amino-4-deoxy-alpha-L-arabinose undecaprenyl phosphate biosynthesis; 4-amino-4-deoxy-alpha-L-arabinose undecaprenyl phosphate from UDP-4-deoxy-4-formamido-beta-L-arabinose and undecaprenyl phosphate: step 1/2. It participates in bacterial outer membrane biogenesis; lipopolysaccharide biosynthesis. Functionally, catalyzes the transfer of 4-deoxy-4-formamido-L-arabinose from UDP to undecaprenyl phosphate. The modified arabinose is attached to lipid A and is required for resistance to polymyxin and cationic antimicrobial peptides. The protein is Undecaprenyl-phosphate 4-deoxy-4-formamido-L-arabinose transferase of Shigella dysenteriae serotype 1 (strain Sd197).